The following is a 581-amino-acid chain: 2-isopropylmalate synthase (581 aa).

The region spanning proline 32–lysine 306 is the Pyruvate carboxyltransferase domain. Mg(2+) is bound by residues aspartate 41, histidine 245, histidine 247, and asparagine 281. The tract at residues arginine 455–valine 581 is regulatory domain.

It belongs to the alpha-IPM synthase/homocitrate synthase family. LeuA type 2 subfamily. Homodimer. It depends on Mg(2+) as a cofactor.

It localises to the cytoplasm. The catalysed reaction is 3-methyl-2-oxobutanoate + acetyl-CoA + H2O = (2S)-2-isopropylmalate + CoA + H(+). It functions in the pathway amino-acid biosynthesis; L-leucine biosynthesis; L-leucine from 3-methyl-2-oxobutanoate: step 1/4. Functionally, catalyzes the condensation of the acetyl group of acetyl-CoA with 3-methyl-2-oxobutanoate (2-ketoisovalerate) to form 3-carboxy-3-hydroxy-4-methylpentanoate (2-isopropylmalate). The sequence is that of 2-isopropylmalate synthase from Corynebacterium efficiens (strain DSM 44549 / YS-314 / AJ 12310 / JCM 11189 / NBRC 100395).